Reading from the N-terminus, the 261-residue chain is Homeobox protein ceh-33 (261 aa).

Residues 133-192 (GEETSYCFRDKSRVLLRDWYCRNSYPSPREKRELAEKTHLTVTQVSNWFKNRRQRDRAGV) constitute a DNA-binding region (homeobox).

This sequence belongs to the SIX/Sine oculis homeobox family.

The protein resides in the nucleus. This Caenorhabditis elegans protein is Homeobox protein ceh-33 (ceh-33).